Reading from the N-terminus, the 356-residue chain is S-adenosylmethionine:tRNA ribosyltransferase-isomerase (356 aa).

It belongs to the QueA family. Monomer.

The protein resides in the cytoplasm. The catalysed reaction is 7-aminomethyl-7-carbaguanosine(34) in tRNA + S-adenosyl-L-methionine = epoxyqueuosine(34) in tRNA + adenine + L-methionine + 2 H(+). It functions in the pathway tRNA modification; tRNA-queuosine biosynthesis. Its function is as follows. Transfers and isomerizes the ribose moiety from AdoMet to the 7-aminomethyl group of 7-deazaguanine (preQ1-tRNA) to give epoxyqueuosine (oQ-tRNA). This Escherichia coli O6:K15:H31 (strain 536 / UPEC) protein is S-adenosylmethionine:tRNA ribosyltransferase-isomerase.